Reading from the N-terminus, the 308-residue chain is Maspardin (308 aa).

One can recognise an AB hydrolase-1 domain in the interval 87-159; the sequence is FCDGFRKLLD…NSFWLMPAFM (73 aa). Ser-304 carries the post-translational modification Phosphoserine.

It belongs to the AB hydrolase superfamily. In terms of assembly, interacts with CD4. Interacts with ALDH16A1. As to expression, expressed in all tissues tested, including heart, brain, placenta, lung, liver, skeletal muscle, kidney and pancreas. Expressed in J.CaM1.6, HuT 78 and HeLa cell lines (at protein level).

It localises to the cytoplasm. It is found in the cytosol. The protein localises to the membrane. The protein resides in the endosome membrane. Its subcellular location is the golgi apparatus. It localises to the trans-Golgi network membrane. In terms of biological role, may play a role as a negative regulatory factor in CD4-dependent T-cell activation. This Homo sapiens (Human) protein is Maspardin (SPG21).